A 551-amino-acid chain; its full sequence is Putative ABC transporter ATP-binding protein BT9727_3105 (551 aa).

2 consecutive ABC transporter domains span residues 5–243 and 293–525; these read AEIN…FRPF and LSAE…SINR. ATP contacts are provided by residues 39-46 and 327-334; these read GGSGSGKT and GKNGTGKS.

It belongs to the ABC transporter superfamily.

It localises to the cell membrane. Probably part of an ABC transporter complex. Responsible for energy coupling to the transport system. The protein is Putative ABC transporter ATP-binding protein BT9727_3105 of Bacillus thuringiensis subsp. konkukian (strain 97-27).